We begin with the raw amino-acid sequence, 170 residues long: Methanogen homoaconitase small subunit (170 aa).

The YLRT motif lies at Y24 to T27.

Belongs to the LeuD family. LeuD type 2 subfamily. As to quaternary structure, heterotetramer of 2 HacA and 2 HacB proteins. Cannot form a complex with LeuC.

It catalyses the reaction (2R)-homocitrate = (2R,3S)-homoisocitrate. The enzyme catalyses (2R)-homocitrate = cis-homoaconitate + H2O. The catalysed reaction is (2R,3S)-homoisocitrate = cis-homoaconitate + H2O. It carries out the reaction cis-(homo)2aconitate + H2O = (2R,3S)-iso(homo)2citrate. It catalyses the reaction cis-(homo)3aconitate + H2O = (2R,3S)-iso(homo)3citrate. The enzyme catalyses (R)-malate = maleate + H2O. The catalysed reaction is cis-aconitate + H2O = D-threo-isocitrate. It functions in the pathway organic acid metabolism; 2-oxosuberate biosynthesis. In terms of biological role, component of a hydro-lyase with broad substrate specificity for cis-unsaturated tricarboxylic acids. Catalyzes both the reversible dehydration of (R)-homocitrate ((R)-2-hydroxybutane-1,2,4-tricarboxylate) to produce cis-homoaconitate ((Z)-but-1-ene-1,2,4-tricarboxylate), and its hydration to homoisocitrate ((1R,2S)-1-hydroxybutane-1,2,4-tricarboxylate). Is also able to hydrate the analogous longer chain substrates cis-homo(2)-aconitate, cis-homo(3)-aconitate, and even the non-physiological cis-homo(4)-aconitate with similar efficiency. These reactions are part of the biosynthesis pathway of coenzyme B. Can also catalyze the hydration of maleate to (R)-malate, and that of cis-aconitate. Cannot catalyze the hydration of citraconate and the dehydration of (S)-homocitrate, citramalate, 2-isopropylmalate, 3-isopropylmalate, citrate or threo-DL-isocitrate. The protein is Methanogen homoaconitase small subunit (hacB) of Methanocaldococcus jannaschii (strain ATCC 43067 / DSM 2661 / JAL-1 / JCM 10045 / NBRC 100440) (Methanococcus jannaschii).